The chain runs to 387 residues: Cyclin-J-like protein (387 aa).

A Cyclin N-terminal domain is found at 13 to 142 (DVHCTLREKE…LLEAFSWDLC (130 aa)).

The protein belongs to the cyclin family. Cyclin J subfamily.

This Mus musculus (Mouse) protein is Cyclin-J-like protein (Ccnjl).